Reading from the N-terminus, the 259-residue chain is Ferritin-2, chloroplastic (259 aa).

A chloroplast-targeting transit peptide spans 1 to 52; the sequence is MLLKLAPAFTLLNSHGENLSPMLSTSSQGFVLKNFSTKSRNGLLVVCASKGS. Residues 53–85 form an extension peptide (EP) region; the sequence is NTKPLTGVVFEPFEEVKKELMLVPTVPQVSLAR. The Ferritin-like diiron domain occupies 86–239; that stretch reads HKYSDQCEAA…EYVAQLRRVG (154 aa). Residues glutamate 103, glutamate 138, histidine 141, and glutamine 221 each contribute to the Fe cation site.

The protein belongs to the ferritin family. As to quaternary structure, oligomer of 24 subunits. There are two types of subunits: L (light) chain and H (heavy) chain. The major chain can be light or heavy, depending on the species and tissue type. The functional molecule forms a roughly spherical shell with a diameter of 12 nm and contains a central cavity into which the insoluble mineral iron core is deposited.

Its subcellular location is the plastid. It is found in the chloroplast. The catalysed reaction is 4 Fe(2+) + O2 + 4 H(+) = 4 Fe(3+) + 2 H2O. In terms of biological role, stores iron in a soluble, non-toxic, readily available form. Important for iron homeostasis. Has ferroxidase activity. Iron is taken up in the ferrous form and deposited as ferric hydroxides after oxidation. This chain is Ferritin-2, chloroplastic (FER2), found in Nicotiana tabacum (Common tobacco).